A 577-amino-acid chain; its full sequence is Protein O-linked-mannose beta-1,4-N-acetylglucosaminyltransferase 2 (577 aa).

The Cytoplasmic segment spans residues 1-4 (MNIA). Residues 5-25 (AVFNALLVSVLATVLWKYIKL) form a helical; Signal-anchor for type II membrane protein membrane-spanning segment. Over 26–577 (REHAFMVEEE…PFADVLLCST (552 aa)) the chain is Lumenal. Asparagine 98, asparagine 275, asparagine 335, and asparagine 540 each carry an N-linked (GlcNAc...) asparagine glycan. The region spanning 481-577 (KVRDARCQAS…PFADVLLCST (97 aa)) is the Fibronectin type-III domain.

This sequence belongs to the glycosyltransferase 61 family.

Its subcellular location is the endoplasmic reticulum membrane. It catalyses the reaction 3-O-(alpha-D-mannosyl)-L-threonyl-[protein] + UDP-N-acetyl-alpha-D-glucosamine = 3-O-(N-acetyl-beta-D-glucosaminyl-(1-&gt;4)-alpha-D-mannosyl)-L-threonyl-[protein] + UDP + H(+). It participates in protein modification; protein glycosylation. In terms of biological role, O-linked mannose beta-1,4-N-acetylglucosaminyltransferase that transfers UDP-N-acetyl-D-glucosamine to the 4-position of the mannose to generate N-acetyl-D-glucosamine-beta-1,4-O-D-mannosylprotein. Involved in the biosynthesis of the phosphorylated O-mannosyl trisaccharide (N-acetylgalactosamine-beta-3-N-acetylglucosamine-beta-4-(phosphate-6-)mannose), a carbohydrate structure present in alpha-dystroglycan (DAG1), which is required for binding laminin G-like domain-containing extracellular proteins with high affinity. The polypeptide is Protein O-linked-mannose beta-1,4-N-acetylglucosaminyltransferase 2 (POMGNT2) (Gallus gallus (Chicken)).